The sequence spans 7785 residues: Probable non-canonical nonribosomal peptide synthetase (NRPS) CymA (7785 aa).

Carrier domains are found at residues 487–562, 1908–1983, and 2958–3033; these read TARS…QRQE, HART…SEQQ, and SPGM…LEGG. O-(pantetheine 4'-phosphoryl)serine occurs at positions 522, 1943, and 2993. An LRR 1 repeat occupies 3088 to 3111; it reads RLALADVVVRHEALRTVFAERAGN. 3 Carrier domains span residues 3978 to 4053, 5002 to 5077, and 6389 to 6464; these read APRT…SEQQ, EPRT…LEAN, and GPRD…AQGS. Residues serine 4013, serine 5037, and serine 6424 each carry the O-(pantetheine 4'-phosphoryl)serine modification. One copy of the LRR 2 repeat lies at 6853 to 6875; sequence TGVSRVDLSVNAIETFDDHGLPA. The 76-residue stretch at 7432–7507 folds into the Carrier 7 domain; that stretch reads GPRTPQEEIL…QLAEQLGSDG (76 aa). An O-(pantetheine 4'-phosphoryl)serine modification is found at serine 7467.

It depends on pantetheine 4'-phosphate as a cofactor.

In terms of biological role, probable non-canonical nonribosomal peptide synthetase (NRPS); part of the gene cluster that mediates the biosynthesis of cyclic heptapeptides, known as cyclomarins and also of cyclic dipeptides, called cyclomarazines, which have both antimicrobial and cytotoxic effects. First, CymD catalyzes the reverse N-prenylation of monomeric L-tryptophan with dimethylallyl diphosphate (DMAPP) to form N-(1,1-dimethylallyl)-tryptophan (r-N-DMAT). The N-(1,1-dimethylallyl)-tryptophan produced by CymD is then combined with a range of standard and nonproteinogenic amino acid substrates to synthesize the peptides, a process that is probably catalyzed by the non-canonical nonribosomal peptide synthetase (NRPS), CymA. Other proteins in the cluster catalyze further modifications of the peptides including CymV which catalyzes the oxidation of olefinic cyclomarins and cyclomarazines to their respective epoxide derivatives. This Salinispora arenicola (strain CNS-205) protein is Probable non-canonical nonribosomal peptide synthetase (NRPS) CymA.